We begin with the raw amino-acid sequence, 434 residues long: Trigger factor (434 aa).

One can recognise a PPIase FKBP-type domain in the interval 160 to 245 (GDKVKMNFVG…LTEVQAANLP (86 aa)).

This sequence belongs to the FKBP-type PPIase family. Tig subfamily.

Its subcellular location is the cytoplasm. The enzyme catalyses [protein]-peptidylproline (omega=180) = [protein]-peptidylproline (omega=0). Involved in protein export. Acts as a chaperone by maintaining the newly synthesized protein in an open conformation. Functions as a peptidyl-prolyl cis-trans isomerase. The chain is Trigger factor from Shewanella putrefaciens (strain CN-32 / ATCC BAA-453).